The following is a 61-amino-acid chain: Small ribosomal subunit protein uS14 (61 aa).

Residues cysteine 24, cysteine 27, cysteine 40, and cysteine 43 each coordinate Zn(2+).

This sequence belongs to the universal ribosomal protein uS14 family. Zinc-binding uS14 subfamily. In terms of assembly, part of the 30S ribosomal subunit. Contacts proteins S3 and S10. The cofactor is Zn(2+).

Its function is as follows. Binds 16S rRNA, required for the assembly of 30S particles and may also be responsible for determining the conformation of the 16S rRNA at the A site. The protein is Small ribosomal subunit protein uS14 of Halothermothrix orenii (strain H 168 / OCM 544 / DSM 9562).